The chain runs to 343 residues: Flavonoid 3'-O-methyltransferase FOMT (343 aa).

S-adenosyl-L-homocysteine contacts are provided by Gly184, Asp207, Asp227, Met228, Met240, and Lys241. His245 functions as the Proton acceptor in the catalytic mechanism. Catalysis depends on residues Glu273 and Glu305.

It belongs to the class I-like SAM-binding methyltransferase superfamily. Cation-independent O-methyltransferase family. As to quaternary structure, homodimer.

The catalysed reaction is 3',5-dihydroxy-3,4',7-trimethoxyflavone + S-adenosyl-L-methionine = 5-hydroxy-3,7,3',4'-tetramethoxyflavone + S-adenosyl-L-homocysteine + H(+). The protein operates within flavonoid metabolism. Its activity is regulated as follows. Inhibited by nickel (NiCl(2) and NiSO(4)) and para-chloromercuribenzoate. In terms of biological role, catalyzes the 3'- or 5'-O-methylation of partially methylated flavonols, but does not accept quercetin or caffeate as substrates for methylation. The sequence is that of Flavonoid 3'-O-methyltransferase FOMT from Chrysosplenium americanum (American golden saxifrage).